Consider the following 203-residue polypeptide: Nascent polypeptide-associated complex subunit alpha (203 aa).

Residues 1 to 19 are compositionally biased toward basic and acidic residues; that stretch reads MADPRIEELPDEEVPKTNV. Residues 1–45 are disordered; the sequence is MADPRIEELPDEEVPKTNVEDAADSSESEAGEEPTIPGGAAVTIH. Residues 21–32 are compositionally biased toward acidic residues; it reads DAADSSESEAGE. The NAC-A/B domain maps to 46 to 111; sequence SRNEKKARKA…AKIEDLNSQA (66 aa). The interval 118–167 is disordered; that stretch reads QLAAAEAAGEHAGHDHDHDKGKGKAPETEAKKEEEEDDGEEVDETGLEPK. Residues 125 to 150 are compositionally biased toward basic and acidic residues; the sequence is AGEHAGHDHDHDKGKGKAPETEAKKE. Acidic residues predominate over residues 151-163; sequence EEEDDGEEVDETG. One can recognise a UBA domain in the interval 164 to 203; it reads LEPKDIDLVMAQANVSRKKAVKALRENDNDIVNSIMALSI.

Belongs to the NAC-alpha family. In terms of assembly, part of the nascent polypeptide-associated complex (NAC), consisting of egd2 and egd1. NAC associates with ribosomes via egd1.

The protein localises to the cytoplasm. Its subcellular location is the nucleus. Its function is as follows. Component of the nascent polypeptide-associated complex (NAC), a dynamic component of the ribosomal exit tunnel, protecting the emerging polypeptides from interaction with other cytoplasmic proteins to ensure appropriate nascent protein targeting. The NAC complex also promotes mitochondrial protein import by enhancing productive ribosome interactions with the outer mitochondrial membrane and blocks the inappropriate interaction of ribosomes translating non-secretory nascent polypeptides with translocation sites in the membrane of the endoplasmic reticulum. Egd2 may also be involved in transcription regulation. This is Nascent polypeptide-associated complex subunit alpha (egd2) from Emericella nidulans (strain FGSC A4 / ATCC 38163 / CBS 112.46 / NRRL 194 / M139) (Aspergillus nidulans).